We begin with the raw amino-acid sequence, 49 residues long: Large ribosomal subunit protein bL33 (49 aa).

This sequence belongs to the bacterial ribosomal protein bL33 family.

In Moorella thermoacetica (strain ATCC 39073 / JCM 9320), this protein is Large ribosomal subunit protein bL33.